Consider the following 372-residue polypeptide: NAD(P)H-quinone oxidoreductase subunit 1 (372 aa).

Helical transmembrane passes span 27–47 (IIWLPLPMLLVLVSAVVGVLV), 97–117 (ILFTAGPILVLVPVILSWLIV), 128–148 (VGIGIFLWIALSSIQPIGLLM), 176–196 (LALSVLAIVLMTNSLSTIDIV), 204–224 (ILSWNIWRQPVGFIIFWICAL), 266–286 (ILSALLVSILYLGGWGFPIPV), 308–328 (SIGIIMTVLKAYLLVFVAILL), and 347–367 (FLLPISLANLLVTAGLKLAFP).

The protein belongs to the complex I subunit 1 family. As to quaternary structure, NDH-1 is composed of at least 11 different subunits.

Its subcellular location is the cellular thylakoid membrane. It catalyses the reaction a plastoquinone + NADH + (n+1) H(+)(in) = a plastoquinol + NAD(+) + n H(+)(out). The enzyme catalyses a plastoquinone + NADPH + (n+1) H(+)(in) = a plastoquinol + NADP(+) + n H(+)(out). Its function is as follows. NDH-1 shuttles electrons from an unknown electron donor, via FMN and iron-sulfur (Fe-S) centers, to quinones in the respiratory and/or the photosynthetic chain. The immediate electron acceptor for the enzyme in this species is believed to be plastoquinone. Couples the redox reaction to proton translocation, and thus conserves the redox energy in a proton gradient. This Prochlorococcus marinus subsp. pastoris (strain CCMP1986 / NIES-2087 / MED4) protein is NAD(P)H-quinone oxidoreductase subunit 1.